Here is a 110-residue protein sequence, read N- to C-terminus: Large ribosomal subunit protein uL22 (110 aa).

It belongs to the universal ribosomal protein uL22 family. In terms of assembly, part of the 50S ribosomal subunit.

This protein binds specifically to 23S rRNA; its binding is stimulated by other ribosomal proteins, e.g. L4, L17, and L20. It is important during the early stages of 50S assembly. It makes multiple contacts with different domains of the 23S rRNA in the assembled 50S subunit and ribosome. Functionally, the globular domain of the protein is located near the polypeptide exit tunnel on the outside of the subunit, while an extended beta-hairpin is found that lines the wall of the exit tunnel in the center of the 70S ribosome. The polypeptide is Large ribosomal subunit protein uL22 (Hahella chejuensis (strain KCTC 2396)).